Here is a 483-residue protein sequence, read N- to C-terminus: uncharacterized protein (483 aa).

Residues 96–137 form a WD repeat; sequence IQCDQDPLSSISWSPSGELLLWSSFDSKITVWSLNTQKGYLL.

This is an uncharacterized protein from Schizosaccharomyces pombe (strain 972 / ATCC 24843) (Fission yeast).